The chain runs to 369 residues: Ubiquitin carboxyl-terminal hydrolase 12 (369 aa).

The Required for plasma membrane localization of USP12/WDR20 signature appears at 1-4 (MEIL). Positions 39–368 (FGLVNFGNTC…SGYILFYQSR (330 aa)) constitute a USP domain. The active-site Nucleophile is Cys-48. The tract at residues 145–165 (KQEKQNGRLPNGNIDSENNST) is disordered. Residues Cys-185, Cys-188, Cys-232, and Cys-235 each coordinate Zn(2+). His-316 acts as the Proton acceptor in catalysis.

The protein belongs to the peptidase C19 family. USP12/USP46 subfamily. As to quaternary structure, interacts with WDR48. Interacts with WDR20; this interaction promotes translocation of the USP12 complex to the plasma membrane. Component of the USP12/WDR20/WDR48 deubiquitinating complex. Component of the USP12/WDR20/WDR48 deubiquitinating complex. Interacts with PHLPP1. Interacts with RBPJ. Interacts with CBP; this interaction blocks the acetyltransferase activity of CREBBP.

It localises to the nucleus. The protein resides in the cytoplasm. Its subcellular location is the cell membrane. It catalyses the reaction Thiol-dependent hydrolysis of ester, thioester, amide, peptide and isopeptide bonds formed by the C-terminal Gly of ubiquitin (a 76-residue protein attached to proteins as an intracellular targeting signal).. Activated by interaction with WDR20, WDR48 and DMWD through different allosteric mechanisms. Deubiquitinating enzyme that plays various roles in the regulation of the immune response and inflammation. During TCR engagement and activation, translocates into the cytoplasm and deubiquitinates its substrates LAT and TRAT1 and prevents their lysosome-dependent degradation to stabilize the TCR signaling complex at the plasma membrane. Plays an essential role in the selective LPS-induced macrophage response through the activation of NF-kappa-B pathway. In addition, promotes that antiviral immune response through targeting DNA sensor IFI16 to inhibit its proteasome-dependent degradation. Participates in the interferon signaling pathway and antiviral response independently of its deubiquitinase activity by maintaining nuclear phosphorylated STAT1 levels via inhibition of its CREBBP-mediated acetylation and subsequent dephosphorylation. Plays an intrinsic role in promoting the differentiation, activation and proliferation of CD4(+) T-cell by activating the NF-kappa-B signaling pathway through deubiquitinating and stabilizing B-cell lymphoma/leukemia 10/BCL10. In myeloid-derived suppressor cells promotes the activation of the NF-kappa-B via deubiquitination and stabilization of RELA. Regulates the 'Lys-63'-linked polyubiquitin chains of BAX and thereby modulates the mitochondrial apoptotic process. Negative regulator of NOTCH signaling that specifically deubiquitinates non-activated NOTCH receptors to target them for lysosomal degradation; deubiquitination of NOTCH stimulates its transport form late endosomes to lysosomes. Protects neurons against HTT/huntingtin-induced polyglutamine expansion-dependent neurodegeneration through regulation of autophagic flux. This function is independent of deubiquitinase activity or of other components of the USP12-WDR20-WDR48 deubiquitinating complex. In complex with WDR48, acts as a potential tumor suppressor by positively regulating PHLPP1 stability. The protein is Ubiquitin carboxyl-terminal hydrolase 12 (USP12) of Bos taurus (Bovine).